A 910-amino-acid polypeptide reads, in one-letter code: DNA repair and recombination protein RAD54B (910 aa).

Polar residues predominate over residues 1-14; the sequence is MRRSAAPSQLQGNS. Residues 1–33 are disordered; the sequence is MRRSAAPSQLQGNSFKKPKFIPPGRSNPGLNEE. Ser14 bears the Phosphoserine mark. A Helicase ATP-binding domain is found at 313-480; sequence GMRMNGRCGA…FALIDFVNPG (168 aa). An ATP-binding site is contributed by 326 to 333; sequence DEMGLGKT. Residues 431–434 carry the DEGH box motif; sequence DEGH. Residues 649–810 form the Helicase C-terminal domain; the sequence is KLLAVIHELR…HIQFSVEELK (162 aa).

It belongs to the SNF2/RAD54 helicase family. As to quaternary structure, interacts with RAD51 through the NH2-terminal domain. Immunoprecipitation experiments show that the interaction is constitutive and not induced by ionizing radiation. The interaction may be indirect. Abundantly expressed in testis and spleen. Relatively low levels observed in thymus, prostate, ovary and colon.

The protein localises to the nucleus. In terms of biological role, involved in DNA repair and mitotic recombination. May play an active role in recombination processes in concert with other members of the RAD52 epistasis group. The polypeptide is DNA repair and recombination protein RAD54B (RAD54B) (Homo sapiens (Human)).